Consider the following 176-residue polypeptide: Peptidoglycan-associated lipoprotein (176 aa).

An N-terminal signal peptide occupies residues 1-21 (MKAGSFYKLGLLVASAVLVAA). Residue cysteine 22 is the site of N-palmitoyl cysteine attachment. Residue cysteine 22 is the site of S-diacylglycerol cysteine attachment. The OmpA-like domain occupies 60–176 (YTTQAPHNQL…RVEFIYEATR (117 aa)).

This sequence belongs to the Pal lipoprotein family. The Tol-Pal system is composed of five core proteins: the inner membrane proteins TolA, TolQ and TolR, the periplasmic protein TolB and the outer membrane protein Pal. They form a network linking the inner and outer membranes and the peptidoglycan layer.

The protein resides in the cell outer membrane. Part of the Tol-Pal system, which plays a role in outer membrane invagination during cell division and is important for maintaining outer membrane integrity. Very strongly associated with the peptidoglycan. In Legionella pneumophila, this protein is Peptidoglycan-associated lipoprotein.